The chain runs to 276 residues: Elongation factor Ts (276 aa).

The involved in Mg(2+) ion dislocation from EF-Tu stretch occupies residues 80 to 83; sequence TDFV.

The protein belongs to the EF-Ts family.

It localises to the cytoplasm. Functionally, associates with the EF-Tu.GDP complex and induces the exchange of GDP to GTP. It remains bound to the aminoacyl-tRNA.EF-Tu.GTP complex up to the GTP hydrolysis stage on the ribosome. The polypeptide is Elongation factor Ts (Kocuria rhizophila (strain ATCC 9341 / DSM 348 / NBRC 103217 / DC2201)).